We begin with the raw amino-acid sequence, 113 residues long: Carrot ABA-induced in somatic embryos 3 (113 aa).

Basic and acidic residues-rich tracts occupy residues 1 to 17 (MASGQEKRSELDARAKQ), 32 to 52 (EAQEHLAEGRSKGGHTRKEQL), and 65 to 77 (GETRREQMGKEGY). The tract at residues 1-113 (MASGQEKRSE…IDQSKFRTKS (113 aa)) is disordered.

Belongs to the small hydrophilic plant seed protein family. In terms of tissue distribution, expressed in embryogenic cells, somatic embryos and seeds at the later stages of development. Not detected in leaves.

The polypeptide is Carrot ABA-induced in somatic embryos 3 (Daucus carota (Wild carrot)).